Here is a 209-residue protein sequence, read N- to C-terminus: Methylthioribulose-1-phosphate dehydratase (209 aa).

Residues His99 and His101 each coordinate Zn(2+).

This sequence belongs to the aldolase class II family. MtnB subfamily. Zn(2+) serves as cofactor.

It catalyses the reaction 5-(methylsulfanyl)-D-ribulose 1-phosphate = 5-methylsulfanyl-2,3-dioxopentyl phosphate + H2O. It functions in the pathway amino-acid biosynthesis; L-methionine biosynthesis via salvage pathway; L-methionine from S-methyl-5-thio-alpha-D-ribose 1-phosphate: step 2/6. Its function is as follows. Catalyzes the dehydration of methylthioribulose-1-phosphate (MTRu-1-P) into 2,3-diketo-5-methylthiopentyl-1-phosphate (DK-MTP-1-P). This Leptospira biflexa serovar Patoc (strain Patoc 1 / Ames) protein is Methylthioribulose-1-phosphate dehydratase.